We begin with the raw amino-acid sequence, 604 residues long: Ectonucleoside triphosphate diphosphohydrolase 7 (604 aa).

The Cytoplasmic segment spans residues 1-28; that stretch reads MARISFSYLCPASWYFTVPTVSPFLRQR. Residues 29 to 49 form a helical membrane-spanning segment; the sequence is VAFLGLFFISCLLLLMLIIDF. The Vesicular portion of the chain corresponds to 50–546; it reads RHWSASLPRD…QAHGSWFRLS (497 aa). The active-site Proton acceptor is glutamate 217. The N-linked (GlcNAc...) asparagine glycan is linked to asparagine 330. An intrachain disulfide couples cysteine 448 to cysteine 477. The chain crosses the membrane as a helical span at residues 547–567; it reads FVYNHYLFFACILVVLLAIVL. Over 568-604 the chain is Cytoplasmic; the sequence is YLLRLRRIHHRQTRASAPLDLLWLEEVVPMMGVQVGP.

This sequence belongs to the GDA1/CD39 NTPase family. Requires Ca(2+) as cofactor. Mg(2+) serves as cofactor.

Its subcellular location is the cytoplasmic vesicle membrane. It catalyses the reaction a ribonucleoside 5'-triphosphate + H2O = a ribonucleoside 5'-diphosphate + phosphate + H(+). The enzyme catalyses UTP + H2O = UDP + phosphate + H(+). It carries out the reaction GTP + H2O = GDP + phosphate + H(+). The catalysed reaction is CTP + H2O = CDP + phosphate + H(+). Functionally, catalyzes the hydrolysis of nucleoside triphosphates and diphosphates in a calcium- or magnesium-dependent manner. Preferentially hydrolyzes nucleoside 5'-triphosphates, with substrate preference for UTP &gt; GTP &gt; CTP. Hydrolyzes ATP and nucleoside diphosphates only to a minor extent. In Pongo abelii (Sumatran orangutan), this protein is Ectonucleoside triphosphate diphosphohydrolase 7 (ENTPD7).